A 515-amino-acid chain; its full sequence is 2,3-bisphosphoglycerate-independent phosphoglycerate mutase (515 aa).

Asp14 and Ser64 together coordinate Mn(2+). The Phosphoserine intermediate role is filled by Ser64. Substrate contacts are provided by residues His125, 155 to 156 (RD), Arg187, Arg193, 263 to 266 (RADR), and Lys337. Residues Asp404, His408, Asp445, His446, and His464 each coordinate Mn(2+).

It belongs to the BPG-independent phosphoglycerate mutase family. In terms of assembly, monomer. Mn(2+) is required as a cofactor.

The enzyme catalyses (2R)-2-phosphoglycerate = (2R)-3-phosphoglycerate. It participates in carbohydrate degradation; glycolysis; pyruvate from D-glyceraldehyde 3-phosphate: step 3/5. Its function is as follows. Catalyzes the interconversion of 2-phosphoglycerate and 3-phosphoglycerate. This chain is 2,3-bisphosphoglycerate-independent phosphoglycerate mutase, found in Yersinia pseudotuberculosis serotype O:1b (strain IP 31758).